Reading from the N-terminus, the 246-residue chain is Biosynthetic peptidoglycan transglycosylase (246 aa).

A helical transmembrane segment spans residues 27-47 (VVFCFFFAVFALLLIFRFVPI).

It belongs to the glycosyltransferase 51 family.

Its subcellular location is the cell inner membrane. It catalyses the reaction [GlcNAc-(1-&gt;4)-Mur2Ac(oyl-L-Ala-gamma-D-Glu-L-Lys-D-Ala-D-Ala)](n)-di-trans,octa-cis-undecaprenyl diphosphate + beta-D-GlcNAc-(1-&gt;4)-Mur2Ac(oyl-L-Ala-gamma-D-Glu-L-Lys-D-Ala-D-Ala)-di-trans,octa-cis-undecaprenyl diphosphate = [GlcNAc-(1-&gt;4)-Mur2Ac(oyl-L-Ala-gamma-D-Glu-L-Lys-D-Ala-D-Ala)](n+1)-di-trans,octa-cis-undecaprenyl diphosphate + di-trans,octa-cis-undecaprenyl diphosphate + H(+). It functions in the pathway cell wall biogenesis; peptidoglycan biosynthesis. Peptidoglycan polymerase that catalyzes glycan chain elongation from lipid-linked precursors. This chain is Biosynthetic peptidoglycan transglycosylase, found in Haemophilus influenzae (strain ATCC 51907 / DSM 11121 / KW20 / Rd).